An 831-amino-acid polypeptide reads, in one-letter code: uncharacterized protein (831 aa).

His-787 serves as the catalytic Tele-phosphohistidine intermediate.

It belongs to the PEP-utilizing enzyme family.

This is an uncharacterized protein from Bacillus subtilis (strain 168).